A 55-amino-acid chain; its full sequence is ATP synthase F(0) complex subunit 8 (55 aa).

Residues 4–24 form a helical membrane-spanning segment; it reads LNPAPWFAILVFSWLVFLTVI. A disordered region spans residues 36 to 55; that stretch reads EPTSQSTEKTKPEPWNWPWH.

It belongs to the ATPase protein 8 family. As to quaternary structure, component of the ATP synthase complex composed at least of ATP5F1A/subunit alpha, ATP5F1B/subunit beta, ATP5MC1/subunit c (homooctomer), MT-ATP6/subunit a, MT-ATP8/subunit 8, ATP5ME/subunit e, ATP5MF/subunit f, ATP5MG/subunit g, ATP5MK/subunit k, ATP5MJ/subunit j, ATP5F1C/subunit gamma, ATP5F1D/subunit delta, ATP5F1E/subunit epsilon, ATP5PF/subunit F6, ATP5PB/subunit b, ATP5PD/subunit d, ATP5PO/subunit OSCP. ATP synthase complex consists of a soluble F(1) head domain (subunits alpha(3) and beta(3)) - the catalytic core - and a membrane F(0) domain - the membrane proton channel (subunits c, a, 8, e, f, g, k and j). These two domains are linked by a central stalk (subunits gamma, delta, and epsilon) rotating inside the F1 region and a stationary peripheral stalk (subunits F6, b, d, and OSCP).

The protein localises to the mitochondrion membrane. Subunit 8, of the mitochondrial membrane ATP synthase complex (F(1)F(0) ATP synthase or Complex V) that produces ATP from ADP in the presence of a proton gradient across the membrane which is generated by electron transport complexes of the respiratory chain. ATP synthase complex consist of a soluble F(1) head domain - the catalytic core - and a membrane F(1) domain - the membrane proton channel. These two domains are linked by a central stalk rotating inside the F(1) region and a stationary peripheral stalk. During catalysis, ATP synthesis in the catalytic domain of F(1) is coupled via a rotary mechanism of the central stalk subunits to proton translocation. In vivo, can only synthesize ATP although its ATP hydrolase activity can be activated artificially in vitro. Part of the complex F(0) domain. In Salvelinus alpinus (Arctic char), this protein is ATP synthase F(0) complex subunit 8.